The chain runs to 396 residues: F-box protein pof13 (396 aa).

The 50-residue stretch at 40-89 folds into the F-box domain; the sequence is KNSNLFLLNRDIWSLIINYLDAFDILRLMHSSRQFYYWLRKSAVDECCFN.

In terms of assembly, part of a SCF (SKP1-cullin-F-box) protein ligase complex. Interacts with skp1.

It localises to the cytoplasm. It functions in the pathway protein modification; protein ubiquitination. This chain is F-box protein pof13 (pof13), found in Schizosaccharomyces pombe (strain 972 / ATCC 24843) (Fission yeast).